A 73-amino-acid polypeptide reads, in one-letter code: Large ribosomal subunit protein bL27c (73 aa).

The protein belongs to the bacterial ribosomal protein bL27 family.

Its subcellular location is the plastid. It is found in the chloroplast. This chain is Large ribosomal subunit protein bL27c (rpl27), found in Haptolina hirta (Plankton alga).